The chain runs to 622 residues: Cytochrome c oxidase subunit 1 (622 aa).

The Extracellular segment spans residues 1 to 27 (MLNALTEKRTRGSMLWDYLTTVDHKKI). The helical transmembrane segment at 28-46 (AILYLVAGGFFFLVGGIEA) threads the bilayer. Over 47–68 (MFIRIQLAKPENAFLSAQAYNE) the chain is Cytoplasmic. Residues 69–88 (VMTMHGTTMIFLAAMPLLFA) traverse the membrane as a helical segment. His73 is a binding site for Fe(II)-heme a. Over 89–110 (LMNAVVPLQIGARDVSFPFLNA) the chain is Extracellular. The helical transmembrane segment at 111 to 128 (LGFWLFFFGGIFLNLSWF) threads the bilayer. The Cytoplasmic segment spans residues 129–159 (LGGAPDAGWTSYASLSLHSKGHGIDFFVLGL). A helical transmembrane segment spans residues 160-178 (QISGLGTLIAGINFLATII). Over 179 to 196 (NMRAPGMTYMRLPLFTWT) the chain is Extracellular. The chain crosses the membrane as a helical span at residues 197–215 (TFVASALILFAFPPLTVGL). At 216-241 (ALMMLDRLFGTNFFNPELGGNTVIWE) the chain is on the cytoplasmic side. The helical transmembrane segment at 242–261 (HLFWIFGHPEVYILILPAFG) threads the bilayer. Cu cation-binding residues include His249 and Tyr253. Positions 249–253 (HPEVY) form a cross-link, 1'-histidyl-3'-tyrosine (His-Tyr). Residues 262 to 284 (IFSEVIPVFARKRLFGYSSMVFA) lie on the Extracellular side of the membrane. A helical transmembrane segment spans residues 285–304 (IVLIGFLGFMVWVHHMFTTG). The Cu cation site is built by His298 and His299. Over 305-312 (LGPIANAI) the chain is Cytoplasmic. The helical transmembrane segment at 313–331 (FAVATMAIAIPTGIKIFNW) threads the bilayer. The Extracellular segment spans residues 332–346 (LLTIWGGNVKYTTAM). Residues 347–366 (LYAVSFIPSFVLGGVTGVML) form a helical membrane-spanning segment. At 367-374 (AAAAADYQ) the chain is on the cytoplasmic side. Residues 375 to 394 (FHDTYFVVAHFHYVIIGGVV) traverse the membrane as a helical segment. His384 lines the heme a3 pocket. His386 contacts Fe(II)-heme a. Topologically, residues 395–421 (FGLLAGVHFWWPKMFGKILHETMGKIS) are extracellular. Residues 422–441 (FVLFFIGFHLTFFIQHFVGL) form a helical membrane-spanning segment. The Cytoplasmic segment spans residues 442 to 459 (MGMPRRVYTFLPGQGLET). Residues 460–479 (GNLISTIGAFFMAAAVILLL) form a helical membrane-spanning segment. The Extracellular segment spans residues 480 to 552 (VNVIWTSVKG…EPVDDIHMPN (73 aa)). A helical membrane pass occupies residues 553–572 (GSILPLIISFGLFVAAFGLL). The Cytoplasmic segment spans residues 573–580 (YRSDYAWG). Residues 581 to 604 (LPVIFIGLGITFITMLLRSVIDDH) form a helical membrane-spanning segment. Residues 605-622 (GYHIHKEELPNDDKGVKA) lie on the Cytoplasmic side of the membrane.

This sequence belongs to the heme-copper respiratory oxidase family. The cofactor is Cu(2+). Requires heme as cofactor.

It localises to the cell membrane. The enzyme catalyses 4 Fe(II)-[cytochrome c] + O2 + 8 H(+)(in) = 4 Fe(III)-[cytochrome c] + 2 H2O + 4 H(+)(out). Its pathway is energy metabolism; oxidative phosphorylation. Cytochrome c oxidase is the component of the respiratory chain that catalyzes the reduction of oxygen to water. Subunits 1-3 form the functional core of the enzyme complex. Co I is the catalytic subunit of the enzyme. Electrons originating in cytochrome c are transferred via the copper A center of subunit 2 and heme a of subunit 1 to the bimetallic center formed by heme a3 and copper B. This cytochrome c oxidase shows proton pump activity across the membrane in addition to the electron transfer. This chain is Cytochrome c oxidase subunit 1 (ctaD), found in Bacillus subtilis (strain 168).